The primary structure comprises 1568 residues: Agglutinin-like protein 7 (1568 aa).

The first 18 residues, 1 to 18 (MKKLYLLYLLASFTTVIS), serve as a signal peptide directing secretion. Intrachain disulfides connect Cys-74–Cys-151, Cys-97–Cys-113, Cys-206–Cys-299, and Cys-228–Cys-257. ALS repeat units lie at residues 403-434 (TTLT…VKIP), 441-471 (ITTQ…IKEP), 476-507 (VTTT…IKEP), and 512-543 (VTTT…IHDP). Disordered regions lie at residues 546–662 (ESSS…SSSS), 721–743 (LSSD…FPHT), and 767–832 (VSLT…SIPT). Low complexity-rich tracts occupy residues 547–662 (SSSS…SSSS), 721–738 (LSSD…SPSD), 768–793 (SLTS…SPST), and 801–824 (SSSF…ILSE). Residue Asn-559 is glycosylated (N-linked (GlcNAc...) asparagine). The N-linked (GlcNAc...) asparagine glycan is linked to Asn-851. 2 disordered regions span residues 860–1030 (VVSS…VASE) and 1046–1097 (EVVS…ENSD). A compositionally biased stretch (low complexity) spans 872-904 (ESSVSVTSESSESVTSESVASESVTSESVTAVS). The span at 909-918 (LYTTSEEVST) shows a compositional bias: polar residues. A compositionally biased stretch (low complexity) spans 919-945 (SDSNSGMSSPIPSSEQRSSIPIMSSSD). Residues 956–992 (GTILSEESSDSIPTTFSTRYWSPSGMSSRHYTNSTET) are compositionally biased toward polar residues. Asn-988 carries an N-linked (GlcNAc...) asparagine glycan. 2 stretches are compositionally biased toward low complexity: residues 993-1002 (SVSDVVSSSV) and 1009-1030 (ESSV…VASE). Residues 1046–1062 (EVVSTSDSKIVPSTSVP) are compositionally biased toward polar residues. Residues 1063–1077 (SSEQRSSIPIMSSSD) are compositionally biased toward low complexity. Asn-1188 is a glycosylation site (N-linked (GlcNAc...) asparagine). Disordered regions lie at residues 1194–1220 (LGMS…EIEL) and 1271–1305 (GLSD…ESLG). 2 stretches are compositionally biased toward polar residues: residues 1272 to 1286 (LSDS…SNRS) and 1294 to 1303 (DNTISISRES). N-linked (GlcNAc...) asparagine glycosylation is present at Asn-1284. Ser-1548 carries the GPI-anchor amidated serine lipid modification. The propeptide at 1549-1568 (GSVSKYSLWMMAFYMLFGLF) is removed in mature form.

The protein belongs to the ALS family. In terms of processing, the GPI-anchor is attached to the protein in the endoplasmic reticulum and serves to target the protein to the cell surface. There, the glucosamine-inositol phospholipid moiety is cleaved off and the GPI-modified mannoprotein is covalently attached via its lipidless GPI glycan remnant to the 1,6-beta-glucan of the outer cell wall layer.

It is found in the cell membrane. The protein localises to the secreted. It localises to the cell wall. Functionally, cell surface adhesion protein which mediates both yeast-to-host tissue adherence and yeast aggregation. Plays an important role in the pathogenesis of C.albicans infections. The polypeptide is Agglutinin-like protein 7 (ALS7) (Candida albicans (strain SC5314 / ATCC MYA-2876) (Yeast)).